Reading from the N-terminus, the 428-residue chain is Histidine--tRNA ligase (428 aa).

It belongs to the class-II aminoacyl-tRNA synthetase family. In terms of assembly, homodimer.

It localises to the cytoplasm. It carries out the reaction tRNA(His) + L-histidine + ATP = L-histidyl-tRNA(His) + AMP + diphosphate + H(+). This chain is Histidine--tRNA ligase, found in Bordetella pertussis (strain Tohama I / ATCC BAA-589 / NCTC 13251).